Here is a 365-residue protein sequence, read N- to C-terminus: Succinyl-diaminopimelate desuccinylase (365 aa).

H64 contacts Zn(2+). The active site involves D66. D95 is a Zn(2+) binding site. The active-site Proton acceptor is E125. Positions 126, 154, and 339 each coordinate Zn(2+).

It belongs to the peptidase M20A family. DapE subfamily. As to quaternary structure, homodimer. Zn(2+) is required as a cofactor. The cofactor is Co(2+).

It catalyses the reaction N-succinyl-(2S,6S)-2,6-diaminopimelate + H2O = (2S,6S)-2,6-diaminopimelate + succinate. It participates in amino-acid biosynthesis; L-lysine biosynthesis via DAP pathway; LL-2,6-diaminopimelate from (S)-tetrahydrodipicolinate (succinylase route): step 3/3. In terms of biological role, catalyzes the hydrolysis of N-succinyl-L,L-diaminopimelic acid (SDAP), forming succinate and LL-2,6-diaminopimelate (DAP), an intermediate involved in the bacterial biosynthesis of lysine and meso-diaminopimelic acid, an essential component of bacterial cell walls. The protein is Succinyl-diaminopimelate desuccinylase of Campylobacter fetus subsp. fetus (strain 82-40).